We begin with the raw amino-acid sequence, 505 residues long: Cobyric acid synthase (505 aa).

Positions 251–444 constitute a GATase cobBQ-type domain; that stretch reads DIDVAVIKLP…IHGIFDNSEF (194 aa). Residue C332 is the Nucleophile of the active site. The active site involves H436.

It belongs to the CobB/CobQ family. CobQ subfamily.

It functions in the pathway cofactor biosynthesis; adenosylcobalamin biosynthesis. Functionally, catalyzes amidations at positions B, D, E, and G on adenosylcobyrinic A,C-diamide. NH(2) groups are provided by glutamine, and one molecule of ATP is hydrogenolyzed for each amidation. The chain is Cobyric acid synthase from Clostridium novyi (strain NT).